Reading from the N-terminus, the 240-residue chain is Protein unc-119 homolog A (240 aa).

The span at 1–12 shows a compositional bias: gly residues; that stretch reads MKVKKGGGGTGP. The interval 1–62 is disordered; sequence MKVKKGGGGT…PLQGKQPIGP (62 aa). S37, S39, and S41 each carry phosphoserine; by CK2. A tetradecanoate-binding site is contributed by Y131.

It belongs to the PDE6D/unc-119 family. Interacts with CABP4; in the absence of calcium. May interact with GTP-bound ARL1. Interacts with ARL2 and ARL3 (GTP-bound forms); this promotes the release of myristoylated cargo proteins. Found in a complex with ARL3, RP2 and UNC119; RP2 induces hydrolysis of GTP ARL3 in the complex, leading to the release of UNC119. Interacts with NPHP3 (when myristoylated). Interacts with CYS1 (when myristoylated). Interacts with MACIR; interaction only takes place when UNC119 is not liganded with myristoylated proteins. Interacts with ARL1 and ARL3 GTP-bound forms. Interacts with ARL2. Interacts with ARL2. Interacts with LCK; this interaction plays a crucial role in activation of LCK. Interacts with FYN. Interacts with RAB11A; in a cell cycle-dependent manner. Interacts with LYN (via SH2 and SH3 domains); leading to LYN activation. Interacts with DNM1; leading to a decrease of DNM1 GTPase activity. Found in a complex with ABL1, ABL2, CRK and UNC119; leading to the inhibition of CRK phosphorylation by ABL kinases. Interacts with CD44. Interacts with KLHL18 (via kelch repeats). Interacts with PPP3CA, PPP3CB and PPP3CC. Interacts with USP48; this interaction promotes UNC119 stability. In terms of processing, phosphorylation suppresses its interaction with KLHL18 and down-regulates its KLHL18-mediated degradation. Phosphorylated more under light conditions than dark conditions. Dephosphorylated by calcineurin.

Its subcellular location is the cytoplasm. The protein resides in the cytoskeleton. The protein localises to the microtubule organizing center. It is found in the centrosome. It localises to the spindle. Its subcellular location is the spindle pole. Its function is as follows. Involved in synaptic functions in photoreceptor cells, the signal transduction in immune cells as a Src family kinase activator, endosome recycling, the uptake of bacteria and endocytosis, protein trafficking in sensory neurons and as lipid-binding chaperone with specificity for a diverse subset of myristoylated proteins. Specifically binds the myristoyl moiety of a subset of N-terminally myristoylated proteins and is required for their localization. Binds myristoylated GNAT1 and is required for G-protein localization and trafficking in sensory neurons. Probably plays a role in trafficking proteins in photoreceptor cells. Plays important roles in mediating Src family kinase signals for the completion of cytokinesis via RAB11A. This chain is Protein unc-119 homolog A (Unc119), found in Rattus norvegicus (Rat).